Consider the following 370-residue polypeptide: Putative agmatine deiminase (370 aa).

Cysteine 361 functions as the Amidino-cysteine intermediate in the catalytic mechanism.

The protein belongs to the agmatine deiminase family.

It catalyses the reaction agmatine + H2O = N-carbamoylputrescine + NH4(+). The polypeptide is Putative agmatine deiminase (Shewanella sp. (strain MR-7)).